The following is a 415-amino-acid chain: Multidrug resistance protein MdtA (415 aa).

A signal peptide spans 1–21; the sequence is MKGSYKSRWVIVIVVVIAAIA. The segment covering 31–46 has biased composition (polar residues); it reads DSQSAAPGATKQAQQS. 2 disordered regions span residues 31-56 and 392-415; these read DSQS…GMRA and EAQS…GARS. Residues 399–415 are compositionally biased toward basic and acidic residues; sequence PEEKATSREYAKKGARS.

This sequence belongs to the membrane fusion protein (MFP) (TC 8.A.1) family. As to quaternary structure, part of a tripartite efflux system composed of MdtA, MdtB and MdtC.

It is found in the cell inner membrane. The MdtABC tripartite complex confers resistance against novobiocin and deoxycholate. The sequence is that of Multidrug resistance protein MdtA from Escherichia coli O6:K15:H31 (strain 536 / UPEC).